Reading from the N-terminus, the 566-residue chain is Lamin-1 (566 aa).

The segment at 1-37 is disordered; it reads MSSRKGTRSSRIVTLERSANSSLSNNGGGDDSFGSTL. At Ser2 the chain carries N-acetylserine. A head region spans residues 13-47; the sequence is VTLERSANSSLSNNGGGDDSFGSTLLETSRLQEKD. An IF rod domain is found at 45–387; that stretch reads EKDHLTSLNS…ALLEGEEERL (343 aa). Positions 48–82 are coil 1A; the sequence is HLTSLNSRLATYIDKVRQLEQENNRLQVQIRDIEV. The interval 83-94 is linker 1; the sequence is VEKKEKSNLADR. A coil 1B region spans residues 95–228; the sequence is FEAEKARLRR…AFALQQHKGE (134 aa). The linker 2 stretch occupies residues 229–256; it reads LEEVRHKRQVDMTTYAKQINDEYQSKLQ. Positions 257-385 are coil 2; sequence DQIEEMRAQF…YQALLEGEEE (129 aa). The interval 386-566 is tail; that stretch reads RLNLTQEAPQ…SDPADRCSIM (181 aa). An LTD domain is found at 435 to 550; it reads RRSKLNKETV…DTVSSITVEF (116 aa). The interval 528–566 is disordered; the sequence is GDNPSARLEDSEGDTVSSITVEFSESSDPSDPADRCSIM. A compositionally biased stretch (polar residues) spans 541–556; it reads DTVSSITVEFSESSDP. Cys563 is subject to Cysteine methyl ester. The S-farnesyl cysteine moiety is linked to residue Cys563. Positions 564 to 566 are cleaved as a propeptide — removed in mature form; the sequence is SIM.

This sequence belongs to the intermediate filament family. Interacts with LEM domain proteins lem-2 and emr-1. May interact with unc-84; this interaction may be required to complete the connection between the nuclear lamina and the cytoskeleton. Ubiquitous. Expressed in all cells, except in cells undergoing spermatogenesis.

The protein localises to the nucleus envelope. It localises to the nucleus inner membrane. In terms of biological role, major component of the nuclear lamina, a fibrous layer on the nucleoplasmic side of the inner nuclear membrane. Provides a framework for the nuclear envelope and probably also interacts with chromatin. Essential to maintain the shape and integrity of the nucleus, and for DNA replication. Involved in spatial organization of nuclear pore complexes. It is not a target for ced-3 during apoptosis, suggesting that lamin cleavage is not essential for apoptosis in C.elegans. This Caenorhabditis elegans protein is Lamin-1.